Consider the following 158-residue polypeptide: 2-C-methyl-D-erythritol 2,4-cyclodiphosphate synthase (158 aa).

Positions 8 and 10 each coordinate a divalent metal cation. 4-CDP-2-C-methyl-D-erythritol 2-phosphate is bound by residues 8-10 (DVH) and 34-35 (HS). Histidine 42 contributes to the a divalent metal cation binding site. Residues 56–58 (DIG), 61–65 (FPDTD), 100–106 (AQKPKML), 132–135 (TTEE), phenylalanine 139, and lysine 142 contribute to the 4-CDP-2-C-methyl-D-erythritol 2-phosphate site.

Belongs to the IspF family. In terms of assembly, homotrimer. Requires a divalent metal cation as cofactor.

The enzyme catalyses 4-CDP-2-C-methyl-D-erythritol 2-phosphate = 2-C-methyl-D-erythritol 2,4-cyclic diphosphate + CMP. The protein operates within isoprenoid biosynthesis; isopentenyl diphosphate biosynthesis via DXP pathway; isopentenyl diphosphate from 1-deoxy-D-xylulose 5-phosphate: step 4/6. Involved in the biosynthesis of isopentenyl diphosphate (IPP) and dimethylallyl diphosphate (DMAPP), two major building blocks of isoprenoid compounds. Catalyzes the conversion of 4-diphosphocytidyl-2-C-methyl-D-erythritol 2-phosphate (CDP-ME2P) to 2-C-methyl-D-erythritol 2,4-cyclodiphosphate (ME-CPP) with a corresponding release of cytidine 5-monophosphate (CMP). This Clostridium tetani (strain Massachusetts / E88) protein is 2-C-methyl-D-erythritol 2,4-cyclodiphosphate synthase.